We begin with the raw amino-acid sequence, 238 residues long: 7-cyano-7-deazaguanine synthase (238 aa).

Residue 15–25 (FSGGQDSTTCL) participates in ATP binding. Residues Cys-203, Cys-218, Cys-221, and Cys-224 each contribute to the Zn(2+) site.

Belongs to the QueC family. The cofactor is Zn(2+).

The enzyme catalyses 7-carboxy-7-deazaguanine + NH4(+) + ATP = 7-cyano-7-deazaguanine + ADP + phosphate + H2O + H(+). The protein operates within purine metabolism; 7-cyano-7-deazaguanine biosynthesis. Its function is as follows. Catalyzes the ATP-dependent conversion of 7-carboxy-7-deazaguanine (CDG) to 7-cyano-7-deazaguanine (preQ(0)). The sequence is that of 7-cyano-7-deazaguanine synthase from Alkalilimnicola ehrlichii (strain ATCC BAA-1101 / DSM 17681 / MLHE-1).